Here is a 204-residue protein sequence, read N- to C-terminus: Leucyl/phenylalanyl-tRNA--protein transferase (204 aa).

It belongs to the L/F-transferase family.

The protein localises to the cytoplasm. It carries out the reaction N-terminal L-lysyl-[protein] + L-leucyl-tRNA(Leu) = N-terminal L-leucyl-L-lysyl-[protein] + tRNA(Leu) + H(+). The enzyme catalyses N-terminal L-arginyl-[protein] + L-leucyl-tRNA(Leu) = N-terminal L-leucyl-L-arginyl-[protein] + tRNA(Leu) + H(+). It catalyses the reaction L-phenylalanyl-tRNA(Phe) + an N-terminal L-alpha-aminoacyl-[protein] = an N-terminal L-phenylalanyl-L-alpha-aminoacyl-[protein] + tRNA(Phe). Its function is as follows. Functions in the N-end rule pathway of protein degradation where it conjugates Leu, Phe and, less efficiently, Met from aminoacyl-tRNAs to the N-termini of proteins containing an N-terminal arginine or lysine. In Brucella anthropi (strain ATCC 49188 / DSM 6882 / CCUG 24695 / JCM 21032 / LMG 3331 / NBRC 15819 / NCTC 12168 / Alc 37) (Ochrobactrum anthropi), this protein is Leucyl/phenylalanyl-tRNA--protein transferase.